Here is a 201-residue protein sequence, read N- to C-terminus: Recombination protein RecR (201 aa).

The C4-type zinc finger occupies 60 to 75 (CSRCGNVDTVDPCIVC). Residues 83–178 (SVIIVVEDVS…KITRLAHGVP (96 aa)) enclose the Toprim domain.

It belongs to the RecR family.

Functionally, may play a role in DNA repair. It seems to be involved in an RecBC-independent recombinational process of DNA repair. It may act with RecF and RecO. The polypeptide is Recombination protein RecR (Rhizobium johnstonii (strain DSM 114642 / LMG 32736 / 3841) (Rhizobium leguminosarum bv. viciae)).